The following is a 163-amino-acid chain: Large ribosomal subunit protein bL19 (163 aa).

Residues 131–150 show a composition bias toward basic and acidic residues; it reads ISQERKASGKDQASKPEVRP. Residues 131 to 163 form a disordered region; it reads ISQERKASGKDQASKPEVRPQGKKPAPKPKAKK. Over residues 151–163 the composition is skewed to basic residues; it reads QGKKPAPKPKAKK.

This sequence belongs to the bacterial ribosomal protein bL19 family.

This protein is located at the 30S-50S ribosomal subunit interface and may play a role in the structure and function of the aminoacyl-tRNA binding site. This is Large ribosomal subunit protein bL19 from Rhodospirillum rubrum (strain ATCC 11170 / ATH 1.1.1 / DSM 467 / LMG 4362 / NCIMB 8255 / S1).